Reading from the N-terminus, the 210-residue chain is Putative 3-methyladenine DNA glycosylase (210 aa).

It belongs to the DNA glycosylase MPG family.

In Lactobacillus helveticus (strain DPC 4571), this protein is Putative 3-methyladenine DNA glycosylase.